The following is a 122-amino-acid chain: Large ribosomal subunit protein uL14 (122 aa).

Belongs to the universal ribosomal protein uL14 family. In terms of assembly, part of the 50S ribosomal subunit. Forms a cluster with proteins L3 and L19. In the 70S ribosome, L14 and L19 interact and together make contacts with the 16S rRNA in bridges B5 and B8.

Its function is as follows. Binds to 23S rRNA. Forms part of two intersubunit bridges in the 70S ribosome. The polypeptide is Large ribosomal subunit protein uL14 (Gloeothece citriformis (strain PCC 7424) (Cyanothece sp. (strain PCC 7424))).